The sequence spans 637 residues: Nucleoside triphosphatase I (637 aa).

The Helicase ATP-binding domain maps to 43 to 205 (FLGLNSMNSI…QMLVNLLRPG (163 aa)). Residue 56–63 (QETGVGKT) participates in ATP binding. The DEXH box motif lies at 142-145 (DECH). One can recognise a Helicase C-terminal domain in the interval 358–537 (ELYNYLYEHS…QLYKVFKHSS (180 aa)). The segment at 459–526 (DIFILDMTWN…DIIQSKSKEF (68 aa)) is binding to the cap-specific mRNA (nucleoside-2'-O-)-methyltransferase.

It belongs to the helicase family. NPH I subfamily. Monomer. Interacts (via C-terminus) with RAP94 (via N-terminus). Interacts with the cap-specific mRNA (nucleoside-2'-O-)-methyltransferase.

Its subcellular location is the virion. It catalyses the reaction a ribonucleoside 5'-triphosphate + H2O = a ribonucleoside 5'-diphosphate + phosphate + H(+). Its function is as follows. DNA-dependent ATPase required for providing the needed energy to achieve the termination of early transcripts. Acts in concert with the RAP94 subunit of the virion RNA polymerase and the capping enzyme/VTF to catalyze release of UUUUUNU-containing nascent RNA from the elongation complex. NPH-I must bind ssDNA in order to exhibit ATPase activity. In Vertebrata (FPV), this protein is Nucleoside triphosphatase I (NPH1).